The following is a 218-amino-acid chain: Flagellar calcium-binding protein TB-24 (218 aa).

The interval 1 to 27 is disordered; the sequence is MGCSASKDTTNSKDGAASKGGKDGKTT. EF-hand domains follow at residues 48–83, 84–119, 130–165, and 167–202; these read ESKS…ILKL, DEFT…LVEF, YDIF…LKEW, and VDIT…KKLQ. Ca(2+)-binding residues include aspartate 61, asparagine 63, threonine 65, lysine 67, and glutamate 72. Residues aspartate 143, aspartate 145, serine 147, glutamate 154, aspartate 180, asparagine 182, serine 184, and glutamate 191 each contribute to the Ca(2+) site.

The protein belongs to the calflagin family.

It is found in the cell projection. Its subcellular location is the cilium. It localises to the flagellum. May contribute to the rapid motility of the trypanosomes, playing a role either in flagellar structure or in calcium metabolism. Could alternate between a GDP-bound inactive form to a calcium/GTP-bound active form. The polypeptide is Flagellar calcium-binding protein TB-24 (Trypanosoma brucei brucei).